A 237-amino-acid chain; its full sequence is MTPQEFYQLLAQQGIELTDRQKDQFERYFELLVEWNEKINLTAITEKNEVYLKHFYDSIAPVLQGLIDNQELKLLDIGAGAGFPSLPMKIICPQLDVTIIDSLNKRINFLKLLAEELGLDKVHFYHGRAEDFAQDKAFRAQFDLVTARAVARMQILSELTIPYLKVGGKLLALKASNAPEELEEAKNALNLLFSKVQDNLSYALPNGDPRFITVVEKKKETPNKYPRKAGMPNKRPL.

S-adenosyl-L-methionine-binding positions include Gly78, Phe83, 129-130 (AE), and Arg148. The disordered stretch occupies residues 218 to 237 (KKETPNKYPRKAGMPNKRPL).

Belongs to the methyltransferase superfamily. RNA methyltransferase RsmG family.

The protein localises to the cytoplasm. Functionally, specifically methylates the N7 position of a guanine in 16S rRNA. The polypeptide is Ribosomal RNA small subunit methyltransferase G (Streptococcus sanguinis (strain SK36)).